A 673-amino-acid chain; its full sequence is Methionine--tRNA ligase (673 aa).

A 'HIGH' region motif is present at residues 14-24 (YYPSGKLHIGN). The short motif at 310–314 (KMSKS) is the 'KMSKS' region element. K313 is an ATP binding site. Residues 571 to 673 (VFDKVELKVA…SEAPNGSSIS (103 aa)) form the tRNA-binding domain.

Belongs to the class-I aminoacyl-tRNA synthetase family. MetG type 2B subfamily. In terms of assembly, homodimer.

It localises to the cytoplasm. It catalyses the reaction tRNA(Met) + L-methionine + ATP = L-methionyl-tRNA(Met) + AMP + diphosphate. Functionally, is required not only for elongation of protein synthesis but also for the initiation of all mRNA translation through initiator tRNA(fMet) aminoacylation. This Oceanobacillus iheyensis (strain DSM 14371 / CIP 107618 / JCM 11309 / KCTC 3954 / HTE831) protein is Methionine--tRNA ligase (metG).